Reading from the N-terminus, the 71-residue chain is Small ribosomal subunit protein bS21 (71 aa).

Belongs to the bacterial ribosomal protein bS21 family.

The chain is Small ribosomal subunit protein bS21 from Buchnera aphidicola subsp. Acyrthosiphon pisum (strain 5A).